The sequence spans 310 residues: MPEELSKKQTTRLNKLQKRLRREVGSAIADYNMIEDGDRVMCCLSGGKDSYAMLDILLNLQQRAPVQFEIIAVNLDQKQPGFPEDVLPAYLDSLNVPYHILEKDTYSIVKEKIPEGKTTCSLCSRLRRGTLYGFAQRIGATKIALGHHRDDIIETLFLNMFFGGKMKAMPPKLLSDDGANVVIRPLAYCREKDLEEYAELKKFPIIPCNLCGSQENLKRQAVKDMLNQWNRQFPGRIETIFTAMQNTAPSQGVDREQFDFVSLKRDPDAPMKGDVAEANLPAFDFLDIANSGHIDLDAAKRIDIVNVYEV.

Residues 45–50 (SGGKDS) carry the PP-loop motif motif. The [4Fe-4S] cluster site is built by cysteine 120, cysteine 123, and cysteine 211.

The protein belongs to the TtcA family. In terms of assembly, homodimer. The cofactor is Mg(2+). Requires [4Fe-4S] cluster as cofactor.

It is found in the cytoplasm. The enzyme catalyses cytidine(32) in tRNA + S-sulfanyl-L-cysteinyl-[cysteine desulfurase] + AH2 + ATP = 2-thiocytidine(32) in tRNA + L-cysteinyl-[cysteine desulfurase] + A + AMP + diphosphate + H(+). It functions in the pathway tRNA modification. Functionally, catalyzes the ATP-dependent 2-thiolation of cytidine in position 32 of tRNA, to form 2-thiocytidine (s(2)C32). The sulfur atoms are provided by the cysteine/cysteine desulfurase (IscS) system. This chain is tRNA-cytidine(32) 2-sulfurtransferase, found in Shewanella oneidensis (strain ATCC 700550 / JCM 31522 / CIP 106686 / LMG 19005 / NCIMB 14063 / MR-1).